We begin with the raw amino-acid sequence, 350 residues long: Small ribosomal subunit biogenesis GTPase RsgA (350 aa).

Over residues 1 to 17 the composition is skewed to polar residues; it reads MSKNKLSKGQQRRVNAN. Positions 1 to 33 are disordered; that stretch reads MSKNKLSKGQQRRVNANHQRRLKTSKEKPDYDD. The CP-type G domain maps to 104–273; sequence TSVLTRPDFY…VIDSPGVREF (170 aa). GTP is bound by residues 160–163 and 214–222; these read NKID and GQSGVGKSS. Zn(2+) is bound by residues Cys-297, Cys-302, His-304, and Cys-310.

This sequence belongs to the TRAFAC class YlqF/YawG GTPase family. RsgA subfamily. Monomer. Associates with 30S ribosomal subunit, binds 16S rRNA. The cofactor is Zn(2+).

The protein localises to the cytoplasm. One of several proteins that assist in the late maturation steps of the functional core of the 30S ribosomal subunit. Helps release RbfA from mature subunits. May play a role in the assembly of ribosomal proteins into the subunit. Circularly permuted GTPase that catalyzes slow GTP hydrolysis, GTPase activity is stimulated by the 30S ribosomal subunit. This chain is Small ribosomal subunit biogenesis GTPase RsgA, found in Shigella boydii serotype 18 (strain CDC 3083-94 / BS512).